Here is an 804-residue protein sequence, read N- to C-terminus: Serine/threonine-protein kinase ATG1 (804 aa).

The region spanning 12 to 308 (FTIGPEIGRG…FQEFFNDPLI (297 aa)) is the Protein kinase domain. ATP contacts are provided by residues 18-26 (IGRGSFANV) and Lys41. The Proton acceptor role is filled by Asp158. Disordered regions lie at residues 339–364 (TSPP…ERAP), 395–415 (INKS…KGAR), and 455–506 (PSPH…MPIS). Over residues 404 to 415 (TVKDGQIKKGAR) the composition is skewed to basic and acidic residues. Positions 462 to 495 (NEHSAANPSGPTETQTQRRFSPSSRTSSIGSNRR) are enriched in polar residues.

It belongs to the protein kinase superfamily. Ser/Thr protein kinase family. APG1/unc-51/ULK1 subfamily. As to quaternary structure, homodimer. Forms a ternary complex with ATG13 and ATG17.

It is found in the cytoplasm. The protein resides in the preautophagosomal structure membrane. The enzyme catalyses L-seryl-[protein] + ATP = O-phospho-L-seryl-[protein] + ADP + H(+). It carries out the reaction L-threonyl-[protein] + ATP = O-phospho-L-threonyl-[protein] + ADP + H(+). Its function is as follows. Serine/threonine protein kinase involved in the cytoplasm to vacuole transport (Cvt) and found to be essential in autophagy, where it is required for the formation of autophagosomes. Involved in the clearance of protein aggregates which cannot be efficiently cleared by the proteasome. Required for selective autophagic degradation of the nucleus (nucleophagy) as well as for mitophagy which contributes to regulate mitochondrial quantity and quality by eliminating the mitochondria to a basal level to fulfill cellular energy requirements and preventing excess ROS production. Also involved in endoplasmic reticulum-specific autophagic process, in selective removal of ER-associated degradation (ERAD) substrates. Plays a key role in ATG9 and ATG23 cycling through the pre-autophagosomal structure and is necessary to promote ATG18 binding to ATG9 through phosphorylation of ATG9. Catalyzes phosphorylation of ATG4, decreasing the interaction between ATG4 and ATG8 and impairing deconjugation of PE-conjugated forms of ATG8. This Pichia angusta (Yeast) protein is Serine/threonine-protein kinase ATG1.